We begin with the raw amino-acid sequence, 212 residues long: Thaumatin-like protein 1b (212 aa).

7 cysteine pairs are disulfide-bonded: C47–C57, C62–C69, C117–C200, C122–C183, C130–C146, C150–C159, and C160–C170.

The protein belongs to the thaumatin family.

Its subcellular location is the secreted. The sequence is that of Thaumatin-like protein 1b from Malus domestica (Apple).